The primary structure comprises 296 residues: Morphine 6-dehydrogenase (296 aa).

13–22 is a binding site for NADP(+); that stretch reads GVKMPALGLG. The active-site Proton donor is the tyrosine 52. Histidine 110 is a binding site for substrate.

This sequence belongs to the aldo/keto reductase family. In terms of assembly, monomer.

It carries out the reaction morphine + NAD(+) = morphinone + NADH + H(+). The enzyme catalyses morphine + NADP(+) = morphinone + NADPH + H(+). It functions in the pathway alkaloid degradation; codeine degradation. It participates in alkaloid degradation; morphine degradation. Functionally, oxidizes only the C-6 hydroxy group of morphine and codeine. The polypeptide is Morphine 6-dehydrogenase (morA) (Pseudomonas putida (Arthrobacter siderocapsulatus)).